The sequence spans 156 residues: Small ribosomal subunit protein uS7 (156 aa).

Belongs to the universal ribosomal protein uS7 family. In terms of assembly, part of the 30S ribosomal subunit. Contacts proteins S9 and S11.

One of the primary rRNA binding proteins, it binds directly to 16S rRNA where it nucleates assembly of the head domain of the 30S subunit. Is located at the subunit interface close to the decoding center, probably blocks exit of the E-site tRNA. The chain is Small ribosomal subunit protein uS7 from Mycobacterium ulcerans (strain Agy99).